Here is a 103-residue protein sequence, read N- to C-terminus: MMESQKIRIRLKAFDHRILDQSTGEIVQTARRTGADIRGPIPLPTKINRYTVLRSPHVDKKSREQFEIRTHKRIIDIVNPTPQTVDALMKLDLAAGVNVEIKL.

The protein belongs to the universal ribosomal protein uS10 family. In terms of assembly, part of the 30S ribosomal subunit.

Functionally, involved in the binding of tRNA to the ribosomes. The sequence is that of Small ribosomal subunit protein uS10 from Magnetococcus marinus (strain ATCC BAA-1437 / JCM 17883 / MC-1).